Reading from the N-terminus, the 228-residue chain is Endonuclease V (228 aa).

Positions 36 and 104 each coordinate Mg(2+).

Belongs to the endonuclease V family. Mg(2+) is required as a cofactor.

The protein resides in the cytoplasm. It catalyses the reaction Endonucleolytic cleavage at apurinic or apyrimidinic sites to products with a 5'-phosphate.. Its function is as follows. DNA repair enzyme involved in the repair of deaminated bases. Selectively cleaves double-stranded DNA at the second phosphodiester bond 3' to a deoxyinosine leaving behind the intact lesion on the nicked DNA. This chain is Endonuclease V, found in Serratia proteamaculans (strain 568).